Reading from the N-terminus, the 439-residue chain is ATP-dependent RNA helicase RhlB (439 aa).

Positions 9–37 (QKFADLPLCDEVKQALNENGFEHCTPIQA) match the Q motif motif. The Helicase ATP-binding domain occupies 40–219 (LPVLLEKKDI…YDHMNDPVKV (180 aa)). ATP is bound at residue 53–60 (AQTGTGKT). The short motif at 165–168 (DEAD) is the DEAD box element. A Helicase C-terminal domain is found at 243–390 (KLKLLHSLIE…VTSYDRDALI (148 aa)). The segment at 394–439 (PPVKIHRKPHAGGRNLRDRNGSPRPSGSHRSGSGRPPRHDRTRRHS) is disordered. The segment covering 415–428 (SPRPSGSHRSGSGR) has biased composition (low complexity). A compositionally biased stretch (basic residues) spans 429–439 (PPRHDRTRRHS).

Belongs to the DEAD box helicase family. RhlB subfamily. Component of the RNA degradosome, which is a multiprotein complex involved in RNA processing and mRNA degradation.

It localises to the cytoplasm. It carries out the reaction ATP + H2O = ADP + phosphate + H(+). DEAD-box RNA helicase involved in RNA degradation. Has RNA-dependent ATPase activity and unwinds double-stranded RNA. The sequence is that of ATP-dependent RNA helicase RhlB from Shewanella amazonensis (strain ATCC BAA-1098 / SB2B).